Here is a 436-residue protein sequence, read N- to C-terminus: UPF0597 protein YhaM (436 aa).

It belongs to the UPF0597 family.

This is UPF0597 protein YhaM from Escherichia coli O6:H1 (strain CFT073 / ATCC 700928 / UPEC).